Here is a 330-residue protein sequence, read N- to C-terminus: Aspartate--ammonia ligase (330 aa).

Belongs to the class-II aminoacyl-tRNA synthetase family. AsnA subfamily.

It localises to the cytoplasm. It catalyses the reaction L-aspartate + NH4(+) + ATP = L-asparagine + AMP + diphosphate + H(+). It functions in the pathway amino-acid biosynthesis; L-asparagine biosynthesis; L-asparagine from L-aspartate (ammonia route): step 1/1. This is Aspartate--ammonia ligase from Streptococcus thermophilus (strain ATCC BAA-250 / LMG 18311).